The primary structure comprises 420 residues: Interleukin-5 receptor subunit alpha (420 aa).

The first 20 residues, 1 to 20, serve as a signal peptide directing secretion; that stretch reads MIIVAHVLLILLGATEILQA. The Extracellular portion of the chain corresponds to 21–342; it reads DLLPDEKISL…NDEHKPLREW (322 aa). The region spanning 32–123 is the Fibronectin type-III 1 domain; that stretch reads PPVNFTIKVT…ASAELHAPPG (92 aa). 2 N-linked (GlcNAc...) asparagine glycosylation sites follow: Asn35 and Asn131. 2 disulfides stabilise this stretch: Cys134–Cys155 and Cys182–Cys196. 2 N-linked (GlcNAc...) asparagine glycosylation sites follow: Asn216 and Asn244. The Fibronectin type-III 2 domain occupies 241–334; it reads PPLNVTAEIE…WSQPIYVGND (94 aa). The cysteines at positions 269 and 316 are disulfide-linked. Positions 322 to 326 match the WSXWS motif motif; the sequence is WSEWS. A helical transmembrane segment spans residues 343-362; that stretch reads FVIVIMATICFILLILSLIC. Residues 363–420 lie on the Cytoplasmic side of the membrane; sequence KICHLWIKLFPPIPAPKSNIKDLFVTTNYEKAGSSETEIEVICYIEKPGVETLEDSVF. The short motif at 371-379 is the Box 1 motif element; sequence LFPPIPAPK.

This sequence belongs to the type I cytokine receptor family. Type 5 subfamily. In terms of assembly, interacts with IL5. Interacts with CSF2RB. Interacts with JAK2. Interacts with SDCBP. Expressed on eosinophils and basophils.

The protein resides in the membrane. In terms of biological role, cell surface receptor that plays an important role in the survival, differentiation, and chemotaxis of eosinophils. Acts by forming a heterodimeric receptor with CSF2RB subunit and subsequently binding to interleukin-5. In unstimulated conditions, interacts constitutively with JAK2. Heterodimeric receptor activation leads to JAK2 stimulation and subsequent activation of the JAK-STAT pathway. The polypeptide is Interleukin-5 receptor subunit alpha (IL5RA) (Homo sapiens (Human)).